Reading from the N-terminus, the 87-residue chain is DNA-directed RNA polymerase subunit omega (87 aa).

It belongs to the RNA polymerase subunit omega family. In terms of assembly, the RNAP catalytic core consists of 2 alpha, 1 beta, 1 beta' and 1 omega subunit. When a sigma factor is associated with the core the holoenzyme is formed, which can initiate transcription.

The catalysed reaction is RNA(n) + a ribonucleoside 5'-triphosphate = RNA(n+1) + diphosphate. Functionally, promotes RNA polymerase assembly. Latches the N- and C-terminal regions of the beta' subunit thereby facilitating its interaction with the beta and alpha subunits. This chain is DNA-directed RNA polymerase subunit omega, found in Pseudomonas fluorescens (strain SBW25).